The following is a 206-amino-acid chain: Ras-related protein Rab-18 (206 aa).

Met-1 is subject to N-acetylmethionine. 11 residues coordinate GTP: Ser-17, Gly-20, Lys-21, Ser-22, Ser-23, Asp-34, Pro-35, Thr-40, Gly-66, Lys-123, and Asp-125. A Mg(2+)-binding site is contributed by Ser-22. 2 consecutive short sequence motifs (switch) follow at residues 31–45 (DTFD…GVDF) and 63–80 (DTAG…YYRG). Thr-40 lines the Mg(2+) pocket. At Ser-144 the chain carries Phosphoserine. Ala-152 is a binding site for GTP. Residue Cys-199 is the site of S-palmitoyl cysteine attachment. The residue at position 203 (Cys-203) is a Cysteine methyl ester. Residue Cys-203 is the site of S-geranylgeranyl cysteine attachment. Residues 204–206 (SVL) constitute a propeptide, removed in mature form.

It belongs to the small GTPase superfamily. Rab family. Interacts (in GTP-bound form) with ZFYVE1. Interacts with ZW10 and this interaction is enhanced in the presence of ZFYVE1. Interacts with BSCL2. As to quaternary structure, (Microbial infection) Interacts with Hepatitis C virus (HCV) non-structural protein 5A; this interaction may promote the association of NS5A and other viral replicase components with lipid droplets. The cofactor is Mg(2+). In terms of tissue distribution, ubiquitous.

It is found in the endoplasmic reticulum membrane. Its subcellular location is the golgi apparatus. The protein resides in the cis-Golgi network membrane. It localises to the lipid droplet. The protein localises to the apical cell membrane. It catalyses the reaction GTP + H2O = GDP + phosphate + H(+). With respect to regulation, regulated by guanine nucleotide exchange factor (GEF) RAB3GAP1-RAB3GAP2 complex at the cis-Golgi membrane which promotes the exchange of bound GDP for free GTP. Regulated by GTPase activating protein (GAP) TBC1D20 at the ER membrane which increases the GTP hydrolysis activity. Inhibited by GDP dissociation inhibitors (GDIs) which prevent Rab-GDP dissociation. In terms of biological role, the small GTPases Rab are key regulators of intracellular membrane trafficking, from the formation of transport vesicles to their fusion with membranes. Rabs cycle between an inactive GDP-bound form and an active GTP-bound form that is able to recruit to membranes different sets of downstream effectors directly responsible for vesicle formation, movement, tethering and fusion. RAB18 is required for the localization of ZFYVE1 to lipid droplets and for its function in mediating the formation of endoplasmic reticulum-lipid droplets (ER-LD) contacts. Also required for maintaining endoplasmic reticulum structure. Plays a role in apical endocytosis/recycling. Plays a key role in eye and brain development and neurodegeneration. This Homo sapiens (Human) protein is Ras-related protein Rab-18.